A 155-amino-acid chain; its full sequence is Cytochrome c-type biogenesis protein CcmE (155 aa).

At 1–8 (MNPRRKKR) the chain is on the cytoplasmic side. Residues 9 to 29 (LLITSLLAVALSLAVGLVLFA) traverse the membrane as a helical; Signal-anchor for type II membrane protein segment. Over 30-155 (LQQNIDLFYT…GMDNFKANNK (126 aa)) the chain is Periplasmic. Heme is bound by residues histidine 131 and tyrosine 135.

This sequence belongs to the CcmE/CycJ family.

The protein localises to the cell inner membrane. Functionally, heme chaperone required for the biogenesis of c-type cytochromes. Transiently binds heme delivered by CcmC and transfers the heme to apo-cytochromes in a process facilitated by CcmF and CcmH. The protein is Cytochrome c-type biogenesis protein CcmE of Psychromonas ingrahamii (strain DSM 17664 / CCUG 51855 / 37).